The following is a 146-amino-acid chain: uncharacterized protein (146 aa).

Residues 7–24 traverse the membrane as a helical segment; the sequence is VIALFLVTGLTLYAIRLL.

The protein resides in the membrane. This is an uncharacterized protein from Haemophilus influenzae (strain ATCC 51907 / DSM 11121 / KW20 / Rd).